The following is a 491-amino-acid chain: Cyclin-A1-3 (491 aa).

Residues 1-21 (MSSSLASRRSSSSSAAKRPAA) show a composition bias toward low complexity. 2 disordered regions span residues 1–32 (MSSS…AAGA) and 69–106 (SLAS…QKES). Polar residues predominate over residues 75-91 (NVGTNRVSAVKSASTKP).

Belongs to the cyclin family. Cyclin AB subfamily.

The protein is Cyclin-A1-3 (CYCA1-3) of Oryza sativa subsp. japonica (Rice).